We begin with the raw amino-acid sequence, 433 residues long: Phosphomethylpyrimidine synthase (433 aa).

Substrate contacts are provided by residues Asn68, Met97, Tyr126, His162, 184-186 (SRG), 225-228 (DALR), and Glu264. His268 is a Zn(2+) binding site. Tyr291 contacts substrate. His332 lines the Zn(2+) pocket. The [4Fe-4S] cluster site is built by Cys408, Cys411, and Cys415.

The protein belongs to the ThiC family. Requires [4Fe-4S] cluster as cofactor.

The enzyme catalyses 5-amino-1-(5-phospho-beta-D-ribosyl)imidazole + S-adenosyl-L-methionine = 4-amino-2-methyl-5-(phosphooxymethyl)pyrimidine + CO + 5'-deoxyadenosine + formate + L-methionine + 3 H(+). It participates in cofactor biosynthesis; thiamine diphosphate biosynthesis. In terms of biological role, catalyzes the synthesis of the hydroxymethylpyrimidine phosphate (HMP-P) moiety of thiamine from aminoimidazole ribotide (AIR) in a radical S-adenosyl-L-methionine (SAM)-dependent reaction. This is Phosphomethylpyrimidine synthase from Fusobacterium nucleatum subsp. nucleatum (strain ATCC 25586 / DSM 15643 / BCRC 10681 / CIP 101130 / JCM 8532 / KCTC 2640 / LMG 13131 / VPI 4355).